A 153-amino-acid polypeptide reads, in one-letter code: 6,7-dimethyl-8-ribityllumazine synthase (153 aa).

5-amino-6-(D-ribitylamino)uracil-binding positions include Phe-22, 56–58 (AFE), and 80–82 (TVI). 85 to 86 (ST) provides a ligand contact to (2S)-2-hydroxy-3-oxobutyl phosphate. His-88 functions as the Proton donor in the catalytic mechanism. Phe-113 is a 5-amino-6-(D-ribitylamino)uracil binding site. Arg-127 serves as a coordination point for (2S)-2-hydroxy-3-oxobutyl phosphate.

It belongs to the DMRL synthase family. As to quaternary structure, forms an icosahedral capsid composed of 60 subunits, arranged as a dodecamer of pentamers.

It carries out the reaction (2S)-2-hydroxy-3-oxobutyl phosphate + 5-amino-6-(D-ribitylamino)uracil = 6,7-dimethyl-8-(1-D-ribityl)lumazine + phosphate + 2 H2O + H(+). Its pathway is cofactor biosynthesis; riboflavin biosynthesis; riboflavin from 2-hydroxy-3-oxobutyl phosphate and 5-amino-6-(D-ribitylamino)uracil: step 1/2. In terms of biological role, catalyzes the formation of 6,7-dimethyl-8-ribityllumazine by condensation of 5-amino-6-(D-ribitylamino)uracil with 3,4-dihydroxy-2-butanone 4-phosphate. This is the penultimate step in the biosynthesis of riboflavin. This chain is 6,7-dimethyl-8-ribityllumazine synthase, found in Haemophilus ducreyi (strain 35000HP / ATCC 700724).